We begin with the raw amino-acid sequence, 1775 residues long: Atrochrysone carboxylic acid synthase (1775 aa).

Residues 35–262 enclose the Starter acyltransferase (SAT) domain; sequence LRRLQALSKD…YAKWASLPIF (228 aa). The Ketosynthase family 3 (KS3) domain occupies 400–833; sequence DSKIAIVGMS…GGNTTMLLEE (434 aa). Active-site for beta-ketoacyl synthase activity residues include C573, H708, and H750. Residues 934–1244 form the Malonyl-CoA:ACP transacylase (MAT) domain; the sequence is FAFTGQGAFY…ENNWNTLADS (311 aa). Positions 1313–1631 are product template (PT) domain; it reads TSSIHQVLQE…RSLLPTFFSP (319 aa). The N-terminal hotdog fold stretch occupies residues 1317 to 1451; that stretch reads HQVLQEDVTG…SAVVEYGDAN (135 aa). The PKS/mFAS DH domain occupies 1317–1626; sequence HQVLQEDVTG…FRRFPRSLLP (310 aa). Catalysis depends on H1349, which acts as the Proton acceptor; for dehydratase activity. Positions 1480 to 1626 are C-terminal hotdog fold; that stretch reads AAVLPRNMAY…FRRFPRSLLP (147 aa). Catalysis depends on D1537, which acts as the Proton donor; for dehydratase activity. The tract at residues 1671–1697 is disordered; it reads TAAPVPAPAPVPAKRAEPAPAAAQAAA. Positions 1688 to 1697 are enriched in low complexity; it reads PAPAAAQAAA. Positions 1697–1774 constitute a Carrier domain; the sequence is ATQNPTITGA…ELKTYIEETF (78 aa). S1734 is subject to O-(pantetheine 4'-phosphoryl)serine.

The catalysed reaction is holo-[ACP] + 8 malonyl-CoA + 8 H(+) = atrochrysone carboxyl-[ACP] + 8 CO2 + 8 CoA + 2 H2O. Its pathway is secondary metabolite biosynthesis. Non-reducing polyketide synthase; part of the gene cluster that mediates the biosynthesis of physcion, a natural anthraquinone fungicide that can prevent plant fungal infections. The pathway begins with the polyketide synthase AcPKS that condenses 8 malonyl-CoA units to synthesize atrochrysone thioester which is released from the synthase by the atrochrysone carboxyl ACP thioesterase AcTE that breaks the thioester bond and leads to free atrochrysone carboxylic acid. Spontaneous decarboxylation of atrochrysone carboxylic acid leads to the formation of atrochrysone. Then, atrochrysone undergoes spontaneous dehydration and oxidation, giving the products emodin anthrone and emodin. The O-methyltransferase AcOMT then methylates the C-6 hydroxyl of emodin to form physcion. The polypeptide is Atrochrysone carboxylic acid synthase (Aspergillus chevalieri (Eurotium chevalieri)).